Reading from the N-terminus, the 34-residue chain is Photosystem II reaction center protein M (34 aa).

A helical membrane pass occupies residues 5-25 (ILGLIATTLFILIPTSFLLIL).

The protein belongs to the PsbM family. As to quaternary structure, PSII is composed of 1 copy each of membrane proteins PsbA, PsbB, PsbC, PsbD, PsbE, PsbF, PsbH, PsbI, PsbJ, PsbK, PsbL, PsbM, PsbT, PsbX, PsbY, PsbZ, Psb30/Ycf12, at least 3 peripheral proteins of the oxygen-evolving complex and a large number of cofactors. It forms dimeric complexes.

It localises to the plastid. It is found in the chloroplast thylakoid membrane. One of the components of the core complex of photosystem II (PSII). PSII is a light-driven water:plastoquinone oxidoreductase that uses light energy to abstract electrons from H(2)O, generating O(2) and a proton gradient subsequently used for ATP formation. It consists of a core antenna complex that captures photons, and an electron transfer chain that converts photonic excitation into a charge separation. This subunit is found at the monomer-monomer interface. The sequence is that of Photosystem II reaction center protein M from Pleurastrum terricola (Filamentous green alga).